The following is a 56-amino-acid chain: uncharacterized protein (56 aa).

2 helical membrane passes run 5-23 and 33-55; these read VLIF…YWIY and ITAG…ILGW.

It is found in the cell membrane. This is an uncharacterized protein from Archaeoglobus fulgidus (strain ATCC 49558 / DSM 4304 / JCM 9628 / NBRC 100126 / VC-16).